The chain runs to 111 residues: Prophage-derived-like uncharacterized protein YozM (111 aa).

The first 24 residues, 1 to 24, serve as a signal peptide directing secretion; that stretch reads MKKRLIGFLVLVPALIMWGITLIE.

The sequence is that of Prophage-derived-like uncharacterized protein YozM (yozM) from Bacillus subtilis (strain 168).